Consider the following 379-residue polypeptide: Alcohol dehydrogenase 2 (379 aa).

Cys48 serves as a coordination point for Zn(2+). NAD(+) is bound at residue 49-53; sequence HTDML. Zn(2+) is bound by residues His69, Cys100, Cys103, Cys106, Cys114, and Cys178. NAD(+) is bound by residues 203 to 208, Asp227, Lys232, 275 to 277, 298 to 300, and 321 to 323; these read GLGAVG, TGI, IGA, and TTF.

This sequence belongs to the zinc-containing alcohol dehydrogenase family. Class-IV subfamily. Homodimer. Requires Zn(2+) as cofactor. As to expression, expressed in flowers and disk florets.

The enzyme catalyses (R,R)-chrysanthemol + NAD(+) = (1R,3R)-chrysanthemal + NADH + H(+). The catalysed reaction is nerol + NAD(+) = neral + NADH + H(+). It catalyses the reaction (S)-(-)-citronellol + NAD(+) = (S)-(-)-citronellal + NADH + H(+). It carries out the reaction perillyl alcohol + NAD(+) = perillyl aldehyde + NADH + H(+). The enzyme catalyses (6E)-8-hydroxygeraniol + NAD(+) = (6E)-8-hydroxygeranial + NADH + H(+). The catalysed reaction is (2E)-geraniol + NAD(+) = (2E)-geranial + NADH + H(+). It functions in the pathway isoprenoid biosynthesis. Functionally, component of the monoterpenoid pyrethrins biosynthesis; pyrethrins are widely used plant-derived pesticide. Mediates the conversion of trans-chrysanthemol into trans-chrysanthemal. The polypeptide is Alcohol dehydrogenase 2 (Tanacetum cinerariifolium (Dalmatian daisy)).